The chain runs to 561 residues: Dihydroxy-acid dehydratase (561 aa).

Position 51 (cysteine 51) interacts with [2Fe-2S] cluster. Aspartate 83 lines the Mg(2+) pocket. Cysteine 124 is a [2Fe-2S] cluster binding site. Residues aspartate 125 and lysine 126 each coordinate Mg(2+). Lysine 126 is modified (N6-carboxylysine). Cysteine 196 is a [2Fe-2S] cluster binding site. Glutamate 447 provides a ligand contact to Mg(2+). Serine 473 (proton acceptor) is an active-site residue.

Belongs to the IlvD/Edd family. As to quaternary structure, homodimer. It depends on [2Fe-2S] cluster as a cofactor. Mg(2+) serves as cofactor.

It catalyses the reaction (2R)-2,3-dihydroxy-3-methylbutanoate = 3-methyl-2-oxobutanoate + H2O. It carries out the reaction (2R,3R)-2,3-dihydroxy-3-methylpentanoate = (S)-3-methyl-2-oxopentanoate + H2O. Its pathway is amino-acid biosynthesis; L-isoleucine biosynthesis; L-isoleucine from 2-oxobutanoate: step 3/4. It participates in amino-acid biosynthesis; L-valine biosynthesis; L-valine from pyruvate: step 3/4. Functionally, functions in the biosynthesis of branched-chain amino acids. Catalyzes the dehydration of (2R,3R)-2,3-dihydroxy-3-methylpentanoate (2,3-dihydroxy-3-methylvalerate) into 2-oxo-3-methylpentanoate (2-oxo-3-methylvalerate) and of (2R)-2,3-dihydroxy-3-methylbutanoate (2,3-dihydroxyisovalerate) into 2-oxo-3-methylbutanoate (2-oxoisovalerate), the penultimate precursor to L-isoleucine and L-valine, respectively. This is Dihydroxy-acid dehydratase from Oceanobacillus iheyensis (strain DSM 14371 / CIP 107618 / JCM 11309 / KCTC 3954 / HTE831).